The sequence spans 103 residues: MAANPPGQGFQNKNRVAILAELDKEKRRLIQSQTLNNPGASIPLSRPAVNKEFRDQAEQQHIAAQQKAALQHAHAHSSGFFITQDSSFGNLILPVLPRLDPLE.

It belongs to the SOSS-C family. Belongs to the multiprotein complex Integrator. Component of the SOSS complex, composed of soss-b (soss-b1/nabp2 or soss-b2/nabp1), soss-a/ints3 and soss-c/inip.

It is found in the nucleus. In terms of biological role, component of the SOSS complex, a multiprotein complex that functions downstream of the MRN complex to promote DNA repair and G2/M checkpoint. The SOSS complex associates with single-stranded DNA at DNA lesions and influences diverse endpoints in the cellular DNA damage response including cell-cycle checkpoint activation, recombinational repair and maintenance of genomic stability. Required for efficient homologous recombination-dependent repair of double-strand breaks (DSBs). This chain is SOSS complex subunit C (inip), found in Danio rerio (Zebrafish).